A 291-amino-acid polypeptide reads, in one-letter code: Inositol-1-monophosphatase (291 aa).

Mg(2+) is bound by residues glutamate 83, aspartate 104, isoleucine 106, and aspartate 107. A substrate-binding site is contributed by glutamate 83. Substrate is bound by residues 106-109, arginine 206, and aspartate 235; that span reads IDGT. Aspartate 235 is a binding site for Mg(2+).

This sequence belongs to the inositol monophosphatase superfamily. Mg(2+) serves as cofactor.

The catalysed reaction is a myo-inositol phosphate + H2O = myo-inositol + phosphate. The protein is Inositol-1-monophosphatase (suhB) of Mycobacterium leprae (strain TN).